A 345-amino-acid polypeptide reads, in one-letter code: Low-density lipoprotein receptor class A domain-containing protein 3 (345 aa).

The first 17 residues, 1-17, serve as a signal peptide directing secretion; it reads MWLLGPLCLLLSSAAES. Topologically, residues 18–173 are extracellular; it reads QLLPGNNFTN…NQLVYYPSIT (156 aa). Asn-24 carries N-linked (GlcNAc...) asparagine glycosylation. LDL-receptor class A domains are found at residues 28-65, 70-107, and 112-148; these read ECNI…KECP, KCGP…ENCT, and LCST…ESCE. Disulfide bonds link Cys-29–Cys-42, Cys-37–Cys-55, Cys-49–Cys-64, Cys-71–Cys-84, Cys-78–Cys-97, Cys-91–Cys-106, Cys-113–Cys-125, Cys-120–Cys-138, and Cys-132–Cys-147. The tract at residues 30 to 57 is (Microbial infection) Interaction with Venezuelan equine encephalitis virus/VEEV spike proteins E1 and E2; the sequence is NIPGNFMCSNGRCIPGAWQCDGLPDCFD. The helical transmembrane segment at 174 to 194 threads the bilayer; sequence YAIIGSSVIFVLVVALLALVL. Residues 195–345 are Cytoplasmic-facing; that stretch reads HHQRKRNNLM…SEPSQGTEEV (151 aa). Short sequence motifs (involved in ITCH interaction) lie at residues 256–259 and 275–278; these read PPSY and PPPY. Residues 270–345 are disordered; sequence WYDLPPPPYS…SEPSQGTEEV (76 aa). Residues 295–313 are compositionally biased toward low complexity; that stretch reads SRSGSANSASSQAASSLLS.

Belongs to the LDLR family. As to quaternary structure, interacts with APP precursor C-terminus. Interacts directly with ITCH; this interaction promotes ITCH auto-ubiquitination leading to its degradation. Interacts directly with NEDD4; this interaction promotes NEDD4 auto-ubiquitination. Interacts directly with NEDD4L. (Microbial infection) Interacts (via domain LDL-receptor class A 1) with Venezuelan equine encephalitis virus/VEEV spike proteins E1 and E2. As to expression, expressed at high levels in brain, lung, skeletal muscle, and pancreas. Expressed at moderate levels in heart, placenta, and kidney but not detected in the liver.

The protein localises to the cell membrane. In terms of biological role, may influence APP processing, resulting in a decrease in sAPP-alpha production and increased amyloidogenic P3 peptide production. May regulate ITCH and NEDD4 E3 ligase activity and degradation. (Microbial infection) Acts as a receptor for Venezuelan equine encephalitis virus. This chain is Low-density lipoprotein receptor class A domain-containing protein 3, found in Homo sapiens (Human).